A 677-amino-acid polypeptide reads, in one-letter code: uncharacterized protein (677 aa).

Residues Met-1–Ala-87 are disordered. The span at Ser-17–Asp-29 shows a compositional bias: basic and acidic residues. The span at Gly-51 to Ser-64 shows a compositional bias: low complexity. Helical transmembrane passes span Val-115–Leu-135, Val-192–Trp-212, Glu-313–Val-333, and Ala-474–Asp-494.

It is found in the cell membrane. This is an uncharacterized protein from Mycobacterium tuberculosis (strain CDC 1551 / Oshkosh).